Here is a 359-residue protein sequence, read N- to C-terminus: Lipopolysaccharide 1,6-galactosyltransferase (359 aa).

Q242 and E274 together coordinate UDP.

It belongs to the glycosyltransferase group 1 family. Glycosyltransferase 4 subfamily.

The catalysed reaction is alpha-D-Glc-(1-&gt;3)-[L-alpha-D-Hep-(1-&gt;7)]-4-O-PO3(2-)-L-alpha-D-Hep-(1-&gt;3)-4-O-PO3(2-)-L-alpha-D-Hep-(1-&gt;5)-[alpha-Kdo-(2-&gt;4)]-alpha-Kdo-(2-&gt;6)-lipid A + UDP-alpha-D-galactose = alpha-D-Gal-(1-&gt;6)-alpha-D-Glc-(1-&gt;3)-[L-alpha-D-Hep-(1-&gt;7)]-4-O-PO3(2-)-L-alpha-D-Hep-(1-&gt;3)-4-O-PO3(2-)-L-alpha-D-Hep-(1-&gt;5)-[alpha-Kdo-(2-&gt;4)]-alpha-Kdo-(2-&gt;6)-lipid A + UDP + H(+). The protein operates within bacterial outer membrane biogenesis; LPS core biosynthesis. Functionally, galactosyltransferase involved in the biosynthesis of the core oligosaccharide region of lipopolysaccharide (LPS). Catalyzes the addition of galactose from UDP-galactose to the first glucose residue of the LPS outer core. Cannot use other sugar donors, such as UDP-glucose, UDP-glucuronic acid, UDP-galacuronic acid, GDP-mannose, ADP-glucose and GDP-glucose. In the absence of a lipid acceptor, can hydrolyze UDP-galactose to UDP and galactose. The protein is Lipopolysaccharide 1,6-galactosyltransferase of Escherichia coli (strain K12).